Here is a 451-residue protein sequence, read N- to C-terminus: Interferon regulatory factor 4 (451 aa).

A DNA-binding region (IRF tryptophan pentad repeat) is located at residues 21–129; that stretch reads NGKLRQWLID…DPYKVYRIVP (109 aa). A phosphoserine; by ROCK2 mark is found at Ser-447 and Ser-448.

The protein belongs to the IRF family. In terms of assembly, interacts with the BATF-JUNB heterodimer. Interacts with BATF (via bZIP domain); the interaction is direct. Interacts with SPIB. Interacts with DEF6. Directly interacts with NLRP3 in the nucleus of Th2 cells; this interaction enhances IRF4 ability to bind to the IL4 promoter and is required for optimal IRF4-dependent IL4 transcription. Interacts with SPI1. In terms of processing, phosphorylation by ROCK2 regulates IL-17 and IL-21 production. Lymphoid cells.

Its subcellular location is the nucleus. The protein resides in the cytoplasm. In terms of biological role, transcriptional activator. Binds to the interferon-stimulated response element (ISRE) of the MHC class I promoter. Binds the immunoglobulin lambda light chain enhancer, together with PU.1. Probably plays a role in ISRE-targeted signal transduction mechanisms specific to lymphoid cells. Involved in CD8(+) dendritic cell differentiation by forming a complex with the BATF-JUNB heterodimer in immune cells, leading to recognition of AICE sequence (5'-TGAnTCA/GAAA-3'), an immune-specific regulatory element, followed by cooperative binding of BATF and IRF4 and activation of genes. The protein is Interferon regulatory factor 4 of Homo sapiens (Human).